Here is a 1217-residue protein sequence, read N- to C-terminus: Disease resistance protein RPS4 (1217 aa).

Residues 14-175 (PQHQVFINFR…EIVKAVKTAL (162 aa)) form the TIR domain. Glu88 is an active-site residue. The region spanning 211-472 (EQRLKDLEEK…FRSQDKDYVE (262 aa)) is the NB-ARC domain. 11 LRR repeats span residues 260–285 (HALI…LLGE), 436–459 (PNIV…AFLD), 614–636 (LKEV…DFNP), 637–659 (INLV…DKDT), 682–706 (AEKL…MKKM), 708–728 (MLAF…EMNL), 729–749 (ISLK…PLIS), 750–774 (DNIE…KLQR), 796–818 (LKAL…EIDI), 819–842 (SFLN…SVQY), and 861–887 (LSQL…NLQC). A disordered region spans residues 1162-1195 (TEGVDGRVKKKKKTRMDNGRPKKKQRSGRDDNQT). The short motif at 1170 to 1177 (KKKKKTRM) is the Nuclear localization signal element.

In terms of assembly, interacts with EDS1.

It localises to the nucleus. It carries out the reaction NAD(+) + H2O = ADP-D-ribose + nicotinamide + H(+). Disease resistance (R) protein that specifically recognizes the AvrRps4 type III effector avirulence protein from Pseudomonas syringae. Resistance proteins guard the plant against pathogens that contain an appropriate avirulence protein via an indirect interaction with this avirulence protein. That triggers a defense system including the hypersensitive response, which restricts the pathogen growth. The combined presence of both regular and alternative RPS4 transcripts with truncated open reading frames (ORFs) is necessary for function. RPS4 function is regulated at multiple levels, including gene expression, alternative splicing, and protein stability. Acts as a disease resistance protein involved in resistance to fungal and bacterial pathogens, including R.solanacearum, P.syringae pv. tomato and C.higginsianum. In presence of RRS1, elicites an EDS1-dependent hypersensitive response. The polypeptide is Disease resistance protein RPS4 (Arabidopsis thaliana (Mouse-ear cress)).